Here is a 118-residue protein sequence, read N- to C-terminus: Protein YoeF (118 aa).

The chain is Protein YoeF (yoeF) from Escherichia coli (strain K12).